We begin with the raw amino-acid sequence, 89 residues long: MSLSVEAKAKIVAEFGRDANDSGSTEVQVALLTAQINHLQGHFAEHKKDHHSRRGLLRMVSQRRKLLDYLKRKDVARYSSLIERLGLRR.

The protein belongs to the universal ribosomal protein uS15 family. As to quaternary structure, part of the 30S ribosomal subunit. Forms a bridge to the 50S subunit in the 70S ribosome, contacting the 23S rRNA.

Functionally, one of the primary rRNA binding proteins, it binds directly to 16S rRNA where it helps nucleate assembly of the platform of the 30S subunit by binding and bridging several RNA helices of the 16S rRNA. Forms an intersubunit bridge (bridge B4) with the 23S rRNA of the 50S subunit in the ribosome. The chain is Small ribosomal subunit protein uS15 from Edwardsiella ictaluri (strain 93-146).